A 576-amino-acid chain; its full sequence is MKTKYSYYNNQLTLIHQGKIVFLKGFIFRKRNLGKTLFFDLRDVSGIVQLLVKENNPQYDKIALIKLETVVQIKGQVIERINKNPDLPTGDIEILVSHIEILSEAQTLPLNVFQSQESLEETRLKYRYLDLRNPEVKHFLIQRHHITQSIRQTLLKNDFLELETPILSKSTPEGARDYLVPSRIYPGNFYALPQSPQLFKQLYMIAGFERYFQVARCFRDEDLRSDRQPEFSQIDIETSFLNQDEIMSLTEEIIVDLFANIWKKPLLQPFLRLTYQQAFELYGSDKPDLRNPLKITDFTTFFDTNTYSQNIFAGKIKGFKVSKTAFLTRRKLDEYQLFFSKHFNLKLFSFVKKNDKIIGGISQFIQDDSFLKNEEICFVVSGKKDIIHKALGIFRTKLALDLSLVDTTQEALLWIVDFPLFETIQEDLSPPNRLYSLHHPFTAPRDATILKSNPQKALANAYDLVWNGYEVGGGSLRINNHQTQELIFSLLGFLQEEVQNRFGFLIEALKYGTPPHGGIALGLDRLVMLFTKTNNIKDVIAFPKTQSAKDLMLEAPSAVNQEQLNTLKLQLKCNFN.

L-aspartate is bound at residue glutamate 173. The tract at residues 197-200 is aspartate; sequence QLFK. L-aspartate is bound at residue arginine 219. Residues 219–221 and glutamine 228 each bind ATP; that span reads RDE. Histidine 438 lines the L-aspartate pocket. An ATP-binding site is contributed by glutamate 470. An L-aspartate-binding site is contributed by arginine 477. Position 522–525 (522–525) interacts with ATP; the sequence is GLDR.

The protein belongs to the class-II aminoacyl-tRNA synthetase family. Type 1 subfamily. As to quaternary structure, homodimer.

Its subcellular location is the cytoplasm. The catalysed reaction is tRNA(Asp) + L-aspartate + ATP = L-aspartyl-tRNA(Asp) + AMP + diphosphate. Its function is as follows. Catalyzes the attachment of L-aspartate to tRNA(Asp) in a two-step reaction: L-aspartate is first activated by ATP to form Asp-AMP and then transferred to the acceptor end of tRNA(Asp). The chain is Aspartate--tRNA ligase from Aster yellows witches'-broom phytoplasma (strain AYWB).